A 547-amino-acid polypeptide reads, in one-letter code: Methionine--tRNA ligase (547 aa).

Positions 15–25 (PYANGSLHLGH) match the 'HIGH' region motif. Positions 146, 149, 159, and 162 each coordinate Zn(2+). The 'KMSKS' region motif lies at 332–336 (KMSKS). Lys335 contacts ATP.

Belongs to the class-I aminoacyl-tRNA synthetase family. MetG type 1 subfamily. As to quaternary structure, monomer. Requires Zn(2+) as cofactor.

Its subcellular location is the cytoplasm. It catalyses the reaction tRNA(Met) + L-methionine + ATP = L-methionyl-tRNA(Met) + AMP + diphosphate. In terms of biological role, is required not only for elongation of protein synthesis but also for the initiation of all mRNA translation through initiator tRNA(fMet) aminoacylation. The polypeptide is Methionine--tRNA ligase (Baumannia cicadellinicola subsp. Homalodisca coagulata).